The chain runs to 224 residues: Beta-casein (224 aa).

An N-terminal signal peptide occupies residues Met-1–Ala-15. A phosphoserine mark is found at Ser-30, Ser-32, Ser-33, and Ser-34. Ser-50 bears the Phosphoserine; in variant A1, variant A2, variant A3, variant B, variant E, variant F, variant G and variant H mark.

Belongs to the beta-casein family. Mammary gland specific. Secreted in milk.

Its subcellular location is the secreted. Functionally, important role in determination of the surface properties of the casein micelles. Casoparan acts as a macrophage activator, increasing the phagocytic activity of macrophages and peroxide release from macrophages. It also acts as a bradykinin-potentiating peptide. In terms of biological role, casohypotensin acts as a bradykinin-potentiating peptide. Induces hypotension in rats. Acts as a strong competitive inhibitor of endo-oligopeptidase A. Its function is as follows. Antioxidant peptide has antioxidant activity. The sequence is that of Beta-casein (CSN2) from Bos taurus (Bovine).